Here is a 273-residue protein sequence, read N- to C-terminus: Ribosomal RNA small subunit methyltransferase I (273 aa).

The protein belongs to the methyltransferase superfamily. RsmI family.

The protein resides in the cytoplasm. The enzyme catalyses cytidine(1402) in 16S rRNA + S-adenosyl-L-methionine = 2'-O-methylcytidine(1402) in 16S rRNA + S-adenosyl-L-homocysteine + H(+). Catalyzes the 2'-O-methylation of the ribose of cytidine 1402 (C1402) in 16S rRNA. The sequence is that of Ribosomal RNA small subunit methyltransferase I from Xylella fastidiosa (strain Temecula1 / ATCC 700964).